The primary structure comprises 528 residues: Transcription factor cghF (528 aa).

The segment at 232 to 283 (TPPNHATSSTPTSTRTPPTYHPHGPRPKSPLSSTPSPRTESTKSAAPSRDLA) is disordered. Low complexity predominate over residues 238–249 (TSSTPTSTRTPP). Polar residues predominate over residues 261–276 (PLSSTPSPRTESTKSA).

The protein localises to the nucleus. Functionally, transcription factor that regulates the expression of the gene cluster that mediates the biosynthesis of the tetramic acid Sch210972, a potential anti-HIV fungal natural product that contains a decalin core. The protein is Transcription factor cghF of Chaetomium globosum (strain ATCC 6205 / CBS 148.51 / DSM 1962 / NBRC 6347 / NRRL 1970) (Soil fungus).